Consider the following 249-residue polypeptide: Basic leucine zipper 23 (249 aa).

The tract at residues K66–K90 is disordered. A bZIP domain is found at E74–Q121. The segment at K78 to K98 is basic motif. Positions L102 to L116 are leucine-zipper.

It localises to the nucleus. Transcription factor involved in the response to zinc ion deficiency. Binds to the consensus sequence 5'-[AG]TGTCGACA[CT]-3' also called zinc deficiency response element (ZDRE). The ZDRE sequence is conserved in the plant kingdom and present in the promoters of genes that constitute the primary response to zinc deficiency, comprising additional ZIP metal transporter genes. Required for zinc accumulation in roots. Mediates the expression of the zinc transporter ZIP12 during growth in zinc-deficient conditions. ZIP12 transporter is involved in zinc uptake in roots. This Arabidopsis thaliana (Mouse-ear cress) protein is Basic leucine zipper 23.